A 113-amino-acid chain; its full sequence is Nucleoid-associated protein CLJ_B0037 (113 aa).

Residues 93 to 102 (EEDTSSEVKR) show a composition bias toward basic and acidic residues. Residues 93–113 (EEDTSSEVKRLTGGMNLPGMF) are disordered.

The protein belongs to the YbaB/EbfC family. As to quaternary structure, homodimer.

The protein localises to the cytoplasm. It is found in the nucleoid. Binds to DNA and alters its conformation. May be involved in regulation of gene expression, nucleoid organization and DNA protection. The sequence is that of Nucleoid-associated protein CLJ_B0037 from Clostridium botulinum (strain 657 / Type Ba4).